The primary structure comprises 175 residues: Coagulogen (175 aa).

Intrachain disulfides connect C8/C167, C10/C95, C60/C161, C65/C121, C75/C168, C88/C140, C127/C170, and C134/C172.

This sequence belongs to the coagulin family. Coagulogen is cleaved after Arg-18 and Arg-46 by a clotting enzyme contained in the hemocyte and activated by a bacterial endotoxin (lipopolysaccharide). This cleavage releases the peptide C and leaves 2 chains of coagulin, A and B, linked by two disulfide bonds. Coagulin molecules interlink to form a gel. As to expression, hemolymph.

It is found in the secreted. Coagulogen is a gel-forming protein of hemolymph; it hinders the spread of invaders by immobilizing them. This Carcinoscorpius rotundicauda (Mangrove horseshoe crab) protein is Coagulogen.